Consider the following 609-residue polypeptide: Phosphomethylpyrimidine synthase (609 aa).

Substrate contacts are provided by residues Asn-219, Met-248, Tyr-277, His-313, 333 to 335 (SRG), 374 to 377 (DGLR), and Glu-413. His-417 contributes to the Zn(2+) binding site. Tyr-440 lines the substrate pocket. His-481 contacts Zn(2+). [4Fe-4S] cluster is bound by residues Cys-561, Cys-564, and Cys-569.

The protein belongs to the ThiC family. [4Fe-4S] cluster serves as cofactor.

The catalysed reaction is 5-amino-1-(5-phospho-beta-D-ribosyl)imidazole + S-adenosyl-L-methionine = 4-amino-2-methyl-5-(phosphooxymethyl)pyrimidine + CO + 5'-deoxyadenosine + formate + L-methionine + 3 H(+). The protein operates within cofactor biosynthesis; thiamine diphosphate biosynthesis. Catalyzes the synthesis of the hydroxymethylpyrimidine phosphate (HMP-P) moiety of thiamine from aminoimidazole ribotide (AIR) in a radical S-adenosyl-L-methionine (SAM)-dependent reaction. This Deinococcus geothermalis (strain DSM 11300 / CIP 105573 / AG-3a) protein is Phosphomethylpyrimidine synthase.